We begin with the raw amino-acid sequence, 33 residues long: Cytochrome b6-f complex subunit 8 (33 aa).

Residues 2 to 22 (IFQIGWAALAAIFTFSIAMVV) traverse the membrane as a helical segment.

The protein belongs to the PetN family. In terms of assembly, the 4 large subunits of the cytochrome b6-f complex are cytochrome b6, subunit IV (17 kDa polypeptide, PetD), cytochrome f and the Rieske protein, while the 4 small subunits are PetG, PetL, PetM and PetN. The complex functions as a dimer.

It is found in the cellular thylakoid membrane. Functionally, component of the cytochrome b6-f complex, which mediates electron transfer between photosystem II (PSII) and photosystem I (PSI), cyclic electron flow around PSI, and state transitions. In Prochlorococcus marinus (strain MIT 9301), this protein is Cytochrome b6-f complex subunit 8.